The chain runs to 284 residues: Large ribosomal subunit protein uL2 (284 aa).

Disordered regions lie at residues 28 to 50 and 232 to 284; these read ELEG…FKKS and RGTA…DRRK. Residues 36-46 are compositionally biased toward basic residues; the sequence is RSVRPNKKLSF. Over residues 240 to 250 the composition is skewed to basic and acidic residues; it reads DHPHGGGEGRH. The segment covering 264 to 284 has biased composition (basic residues); sequence KGLKTRDKRKSNKWIVKDRRK.

It belongs to the universal ribosomal protein uL2 family. Part of the 50S ribosomal subunit. Forms a bridge to the 30S subunit in the 70S ribosome.

Its function is as follows. One of the primary rRNA binding proteins. Required for association of the 30S and 50S subunits to form the 70S ribosome, for tRNA binding and peptide bond formation. It has been suggested to have peptidyltransferase activity; this is somewhat controversial. Makes several contacts with the 16S rRNA in the 70S ribosome. This Chlamydia muridarum (strain MoPn / Nigg) protein is Large ribosomal subunit protein uL2.